Here is a 56-residue protein sequence, read N- to C-terminus: Large ribosomal subunit protein eL40 (56 aa).

The protein belongs to the eukaryotic ribosomal protein eL40 family.

The protein is Large ribosomal subunit protein eL40 of Saccharolobus islandicus (strain Y.N.15.51 / Yellowstone #2) (Sulfolobus islandicus).